The primary structure comprises 541 residues: MTSIDTLWLLLCAGLVFFMQAGFMCLESGLTRSKNSINVAIKNFADFGISVALFWSFGFSIMFGLSQGGWWGTGYSFVDVGGEPTLAVFFLFQAMFCGTATTIISGAAAERLKFSAYLLVAGLASGLIYPLFGDWAWNGLATVAGIETTGGWLENLGFRDFAGSTVVHSVGAWIGLATILVVGPRQGRFPKTGKTLKIQGSNMPFSVLGTLILWFGWLGFNGGSTFGLTPEVPGIMVNTVLAGVGGMLMAGLISLLQDKMIQVEPLMNGSLAGLVAITASANVVMTPIAMVIGATGSAIAYLVGKKMLHWGVDDAVDAVAVHGGAGVWGTLCVGLFGQLPLVDTGLNRWQQCGVQLLGIGVCTLWAFGLAWVFLTLLNRVFALRISPEDEEIGLNVSEHQATTETYELFQVMDRQAKTHDLSLRVPVNPFTEVGHIAGRYNQVMDAFEARHHRSVEDLAQIYYVTAAIAAAIENNSFKADQLGLEEVTNRADELGALARTIQQMAEMLQQRDQELIAVKQQLVLQQQKQHHGNGESVDLSP.

11 helical membrane passes run 6 to 26, 44 to 64, 86 to 106, 117 to 137, 161 to 181, 203 to 223, 235 to 255, 260 to 280, 283 to 303, 316 to 336, and 356 to 376; these read TLWLLLCAGLVFFMQAGFMCL, FADFGISVALFWSFGFSIMFG, LAVFFLFQAMFCGTATTIISG, YLLVAGLASGLIYPLFGDWAW, FAGSTVVHSVGAWIGLATILV, MPFSVLGTLILWFGWLGFNGG, IMVNTVLAGVGGMLMAGLISL, MIQVEPLMNGSLAGLVAITAS, VVMTPIAMVIGATGSAIAYLV, VDAVAVHGGAGVWGTLCVGLF, and LLGIGVCTLWAFGLAWVFLTL.

This sequence belongs to the ammonia transporter channel (TC 1.A.11.2) family.

The protein localises to the cell membrane. The polypeptide is Putative ammonium transporter sll0537 (Synechocystis sp. (strain ATCC 27184 / PCC 6803 / Kazusa)).